A 596-amino-acid polypeptide reads, in one-letter code: Sphingomyelinase C 1 (596 aa).

An N-terminal signal peptide occupies residues 1–36; sequence MITKRNIPCKKNWKYKKKSISLTLITICYMFLFLTS. The interval 63–118 is disordered; sequence KIEDSTNTDPSSNVNEEDENSINANANDNAPSDSDSSNPRSPDKNPVNPTSPNSSS. Over residues 67–76 the composition is skewed to polar residues; sequence STNTDPSSNV. Low complexity predominate over residues 83–118; it reads SINANANDNAPSDSDSSNPRSPDKNPVNPTSPNSSS.

The protein localises to the secreted. It carries out the reaction a sphingomyelin + H2O = phosphocholine + an N-acylsphing-4-enine + H(+). This chain is Sphingomyelinase C 1 (sph1), found in Leptospira interrogans serogroup Icterohaemorrhagiae serovar copenhageni (strain Fiocruz L1-130).